Here is a 284-residue protein sequence, read N- to C-terminus: 2-dehydro-3-deoxyphosphooctonate aldolase (284 aa).

It belongs to the KdsA family.

The protein resides in the cytoplasm. It carries out the reaction D-arabinose 5-phosphate + phosphoenolpyruvate + H2O = 3-deoxy-alpha-D-manno-2-octulosonate-8-phosphate + phosphate. It participates in carbohydrate biosynthesis; 3-deoxy-D-manno-octulosonate biosynthesis; 3-deoxy-D-manno-octulosonate from D-ribulose 5-phosphate: step 2/3. It functions in the pathway bacterial outer membrane biogenesis; lipopolysaccharide biosynthesis. This chain is 2-dehydro-3-deoxyphosphooctonate aldolase, found in Paraburkholderia xenovorans (strain LB400).